Here is a 436-residue protein sequence, read N- to C-terminus: Flagellum-specific ATP synthase (436 aa).

165 to 172 (SGSGVGKS) provides a ligand contact to ATP.

Belongs to the ATPase alpha/beta chains family.

Its subcellular location is the cytoplasm. It carries out the reaction ATP + H2O + 4 H(+)(in) = ADP + phosphate + 5 H(+)(out). In terms of biological role, probable catalytic subunit of a protein translocase for flagellum-specific export, or a proton translocase involved in local circuits at the flagellum. May be involved in a specialized protein export pathway that proceeds without signal peptide cleavage. The sequence is that of Flagellum-specific ATP synthase (fliI) from Borreliella burgdorferi (strain ATCC 35210 / DSM 4680 / CIP 102532 / B31) (Borrelia burgdorferi).